We begin with the raw amino-acid sequence, 123 residues long: UPF0102 protein mma_0204 (123 aa).

This sequence belongs to the UPF0102 family.

This Janthinobacterium sp. (strain Marseille) (Minibacterium massiliensis) protein is UPF0102 protein mma_0204.